The sequence spans 446 residues: Phosphoglucosamine mutase (446 aa).

The active-site Phosphoserine intermediate is Ser100. Ser100, Asp241, Asp243, and Asp245 together coordinate Mg(2+). Ser100 is modified (phosphoserine).

Belongs to the phosphohexose mutase family. The cofactor is Mg(2+). Activated by phosphorylation.

The enzyme catalyses alpha-D-glucosamine 1-phosphate = D-glucosamine 6-phosphate. Its function is as follows. Catalyzes the conversion of glucosamine-6-phosphate to glucosamine-1-phosphate. The protein is Phosphoglucosamine mutase of Methylorubrum populi (strain ATCC BAA-705 / NCIMB 13946 / BJ001) (Methylobacterium populi).